The sequence spans 421 residues: ATP-dependent RNA helicase RhlB (421 aa).

The Q motif motif lies at 9–37; it reads QKFSDFALHPAVIEALEKKGFHNCTPIQA. A Helicase ATP-binding domain is found at 40–219; the sequence is LPLTLEGRDV…FEQMNNAEYV (180 aa). 53–60 contacts ATP; it reads AQTGTGKT. A DEAD box motif is present at residues 165–168; the sequence is DEAD. Residues 245–390 enclose the Helicase C-terminal domain; that stretch reads RLLQTLLEEE…VSKYNPDALM (146 aa). Positions 396–421 are disordered; it reads PLRLTRARPGNGPRRNGPPRNRRRSG. The span at 403–414 shows a compositional bias: low complexity; the sequence is RPGNGPRRNGPP.

This sequence belongs to the DEAD box helicase family. RhlB subfamily. As to quaternary structure, component of the RNA degradosome, which is a multiprotein complex involved in RNA processing and mRNA degradation.

The protein localises to the cytoplasm. It catalyses the reaction ATP + H2O = ADP + phosphate + H(+). DEAD-box RNA helicase involved in RNA degradation. Has RNA-dependent ATPase activity and unwinds double-stranded RNA. This Klebsiella pneumoniae subsp. pneumoniae (strain ATCC 700721 / MGH 78578) protein is ATP-dependent RNA helicase RhlB.